Here is a 178-residue protein sequence, read N- to C-terminus: Disulfide bond formation protein B (178 aa).

Residues 1–14 (MLSFFKTLSMGRSG) lie on the Cytoplasmic side of the membrane. Residues 15-31 (WLLLAFSALVLELVALY) traverse the membrane as a helical segment. The Periplasmic portion of the chain corresponds to 32-49 (FQYGMQLQPCVMCVYERV). A disulfide bond links Cys41 and Cys44. The helical transmembrane segment at 50–65 (ALGGILFAGIIGAIAP) threads the bilayer. Over 66–72 (SSWFFRF) the chain is Cytoplasmic. Residues 73-90 (LGIIIGLGASVKGFLLAL) traverse the membrane as a helical segment. Residues 91–145 (KHVDYQLNPAPWNQCAYLPEFPQTLPLDQWFPYLFKPIGSCSDIQWSFLGFSMAQ) lie on the Periplasmic side of the membrane. Cys105 and Cys131 form a disulfide bridge. A helical membrane pass occupies residues 146–164 (WILVMFAFYSILLAIILIS). Residues 165–178 (QVKAGKPKHREIFR) lie on the Cytoplasmic side of the membrane.

Belongs to the DsbB family.

The protein resides in the cell inner membrane. In terms of biological role, required for disulfide bond formation in some periplasmic proteins. Acts by oxidizing the DsbA protein. The protein is Disulfide bond formation protein B of Mannheimia succiniciproducens (strain KCTC 0769BP / MBEL55E).